Consider the following 90-residue polypeptide: Long neurotoxin OH-34 (90 aa).

Positions 1–20 (KTLLLTLVVVTILCLDLGYT) are cleaved as a signal peptide. Disulfide bonds link Cys-23-Cys-41, Cys-34-Cys-62, Cys-47-Cys-51, Cys-66-Cys-77, and Cys-78-Cys-83.

This sequence belongs to the three-finger toxin family. Long-chain subfamily. Type II alpha-neurotoxin sub-subfamily. Expressed by the venom gland.

Its subcellular location is the secreted. Binds with high affinity to muscular (alpha-1/CHRNA1) and neuronal (alpha-7/CHRNA7) nicotinic acetylcholine receptor (nAChR) and inhibits acetylcholine from binding to the receptor, thereby impairing neuromuscular and neuronal transmission. This chain is Long neurotoxin OH-34, found in Ophiophagus hannah (King cobra).